The following is a 370-amino-acid chain: Leucine-rich repeat and transmembrane domain-containing protein 2 (370 aa).

A signal peptide spans 1–35 (MLAPGSSPGQRGRLALQWRQVSWITCWIALYAVEA). One can recognise an LRRNT domain in the interval 36–68 (LPTCPFSCKCDSRSLEVDCSGLGLTTVPPDVPA). Residues 36–310 (LPTCPFSCKC…PASVRRAMGT (275 aa)) are Extracellular-facing. LRR repeat units follow at residues 69–90 (ATRT…AFAN), 93–114 (SLQR…IFGD), 117–139 (NLTE…LRHS), 141–162 (LLRH…LFDG), and 165–186 (ALRS…TFEP). A glycan (N-linked (GlcNAc...) asparagine) is linked at N90. N117 and N125 each carry an N-linked (GlcNAc...) asparagine glycan. The LRRCT domain maps to 198–252 (NPWECDCNLREFKHWMEWFSYRGGRLDQLACTLPKELRGKDMRMVPMEMFNYCSQ). N257 carries an N-linked (GlcNAc...) asparagine glycan. The disordered stretch occupies residues 261-300 (GLDIPGPPCTKASPEPAKPKPGAEPEPEPSTACPQKQRHR). The chain crosses the membrane as a helical span at residues 311-331 (VIIAGVVCGVVCIMMVVAAAY). Residues 332-370 (GCIYASLMAKYHRELKKRQPLMGDPEGEHEDQKQISSVA) lie on the Cytoplasmic side of the membrane. The segment at 351-370 (PLMGDPEGEHEDQKQISSVA) is disordered.

It is found in the membrane. This chain is Leucine-rich repeat and transmembrane domain-containing protein 2 (LRTM2), found in Homo sapiens (Human).